The following is a 114-amino-acid chain: Large ribosomal subunit protein uL18 (114 aa).

This sequence belongs to the universal ribosomal protein uL18 family. Part of the 50S ribosomal subunit; part of the 5S rRNA/L5/L18/L25 subcomplex. Contacts the 5S and 23S rRNAs.

Functionally, this is one of the proteins that bind and probably mediate the attachment of the 5S RNA into the large ribosomal subunit, where it forms part of the central protuberance. The chain is Large ribosomal subunit protein uL18 from Parabacteroides distasonis (strain ATCC 8503 / DSM 20701 / CIP 104284 / JCM 5825 / NCTC 11152).